The primary structure comprises 1389 residues: CRISPR-associated endoribonuclease Cas13a (1389 aa).

An NTD region spans residues 1-347 (MGNLFGHKRW…DKHEKFKIER (347 aa)). A crRNA-binding site is contributed by Arg219. 3 binds crRNA regions span residues 330–342 (YIKSYVLLDKHEK), 405–408 (KKHY), and 432–436 (YRYLK). Residues 348–498 (ENKKDKIVKF…KLRHNDIDMT (151 aa)) are helical-1. Active-site for pre-crRNA processing residues include Arg438 and Lys441. Position 441 (Lys441) interacts with crRNA. The segment at 471–475 (KILKR) is binds crRNA. Lys489 provides a ligand contact to crRNA. The segment at 499 to 636 (TVNTDDFSRL…LKISDEEVSK (138 aa)) is HEPN-like fold 1-I. Residues 502-509 (TDDFSRLH) form a binds crRNA region. Active-site for target ssRNA cleavage residues include Arg597 and His602. The interval 637-828 (ALNLDVVFKD…ERITVKTSDK (192 aa)) is helical-2. Gln759 is a crRNA binding site. Residues 829 to 899 (TIVINDDFEY…ECITENWNLN (71 aa)) form an HEPN-like fold 1-II region. Positions 853 to 858 (NKIRNR) are binds crRNA. Trp865 serves as a coordination point for crRNA. 3 coiled-coil regions span residues 893-920 (TENWNLNLEEFIQKMKEIEKDFDDFKIQ), 968-1046 (EIDK…FQEI), and 1101-1131 (KNKISEIDAILKNLNDKLNGYSKEYKEKYIK). Residues 900–1170 (LEEFIQKMKE…EYKKIRDLVE (271 aa)) form a linker region. An HEPN-like fold 2 region spans residues 1170–1290 (EFNYLNKIES…ISHFYIVRNP (121 aa)). Catalysis depends on for target ssRNA cleavage residues Arg1278 and His1283. Binds crRNA regions lie at residues 1311–1316 (TRYNNS) and 1338–1339 (KK).

Belongs to the CRISPR-associated endoribonuclease Cas13a family. As to quaternary structure, monomer. It depends on Mg(2+) as a cofactor.

With respect to regulation, RNase activity on target is decreased by EDTA. Target RNA acts as an activator for non-specific ssRNA degradation. In terms of biological role, CRISPR (clustered regularly interspaced short palindromic repeat), is an adaptive immune system that provides protection against mobile genetic elements (viruses, transposable elements and conjugative plasmids). CRISPR clusters contain sequences complementary to antecedent mobile elements (spacers) and target invading nucleic acids. Unlike many single-component effectors, this CRISPR-Cas system targets RNA. CRISPR clusters are transcribed from pre-CRISPR RNA (crRNA) and processed into crRNA (optimally 28 nucleotides in this system) by this protein. This protein processes pre-crRNA at a 'non-typical' site 1 nucleotide upstream of the pre-crRNA stem-loop; it cleaves pre-crRNA from L.buccalis and L.wadei in a similar fashion, whereas the enzymes from the latter 2 bacteria cleave their own pre-crRNA 3 nt further upstream. When the appropriate target sequences are cloned into the CRISPR array, confers immunity to ssRNA(+) enterobacteria phage MS2. Cleaves linear target ssRNA in a crRNA-dependent fashion, preferentially before U residues; has no activity on partially dsRNA, ssDNA or dsDNA. RNA secondary structure surrounding the target influence the cleavage site and efficiency; unlike other CRISPR-Cas effectors Cas13a cleaves outside of the crRNA binding site. In the presence of a viable RNA target other RNAs are also degraded (called collateral RNA degradation), suggesting this type of CRISPR-Cas might also prevent viral spread by inducing programmed cell death or dormancy. This system has a 3' protospacer flanking site (PFS), it does not cleave when the 3' PFS is G (PFS is equivalent to PAM, the protospacer adjacent motif). Mutations of its active site residues results in an RNA-programmed RNA-binding protein. In Leptotrichia shahii (strain DSM 19757 / CCUG 47503 / CIP 107916 / JCM 16776 / LB37), this protein is CRISPR-associated endoribonuclease Cas13a.